We begin with the raw amino-acid sequence, 503 residues long: MTDKKYIIALDQGTTSSRAVLLDHNANVVEIAQREFTQIYPRAGWVEHNPMEIWATQSSTLNEVVAKAGITSDEIAAIGITNQRETTIVWEKSTGTPVYNAIVWQCRRTADITDKLKADGHEEYIRNTTGLVVDPYFSGTKVKWILDNVEGAREKAERGELLFGTVDTWLVWKLTQGRVHVTDYTNASRTMLFNIHTKQWDDKMLEILNIPRSMLPEVRNSSEIYGQTNIGGKGGVRIPVAGIAGDQQAALYGHLCVHAGQAKNTYGTGCFMLLHTGNKAITSKNGLLTTIACNAKGEPEYALEGSVFIAGASIQWLRDELKIVHDSFDSEYFAQKVTDSNGVYVVPAFTGLGAPYWDPYARGAIFGLSRGANRNHIVRATLESIAYQTRDVLEAMQSDSGERLQYLRVDGGATNNNFLMQFQADILDVNVERPVVKEVTALGAAYLAGLATGFWKDLDELRDKARVERTFSPDSDNEKRERRYKGWKKAVKRSLEWAKEDEE.

Residue Thr-14 participates in ADP binding. Positions 14, 15, and 16 each coordinate ATP. Position 14 (Thr-14) interacts with sn-glycerol 3-phosphate. Arg-18 contributes to the ADP binding site. 4 residues coordinate sn-glycerol 3-phosphate: Arg-84, Glu-85, Tyr-136, and Asp-246. 5 residues coordinate glycerol: Arg-84, Glu-85, Tyr-136, Asp-246, and Gln-247. The ADP site is built by Thr-268 and Gly-311. ATP is bound by residues Thr-268, Gly-311, Gln-315, and Gly-412. ADP contacts are provided by Gly-412 and Asn-416. Residues 468–481 show a composition bias toward basic and acidic residues; the sequence is ERTFSPDSDNEKRE. Residues 468 to 489 form a disordered region; that stretch reads ERTFSPDSDNEKRERRYKGWKK.

This sequence belongs to the FGGY kinase family.

It carries out the reaction glycerol + ATP = sn-glycerol 3-phosphate + ADP + H(+). It participates in polyol metabolism; glycerol degradation via glycerol kinase pathway; sn-glycerol 3-phosphate from glycerol: step 1/1. Inhibited by fructose 1,6-bisphosphate (FBP). In terms of biological role, key enzyme in the regulation of glycerol uptake and metabolism. Catalyzes the phosphorylation of glycerol to yield sn-glycerol 3-phosphate. The polypeptide is Glycerol kinase (Haemophilus influenzae (strain ATCC 51907 / DSM 11121 / KW20 / Rd)).